We begin with the raw amino-acid sequence, 164 residues long: MVARSEEVEIVEDTAAKCLMLLSRVGECGGGGEKRVFRCKTCLKEFSSFQALGGHRASHKKLINSSDPSLLGSLSNKKTKTATSHPCPICGVEFPMGQALGGHMRRHRSEKASPGTLVTRSFLPETTTVTTLKKSSSGKRVACLDLDSMESLVNWKLELGRTIS.

C2H2-type zinc fingers lie at residues 37–59 (FRCK…RASH) and 85–107 (HPCP…MRRH).

The protein localises to the nucleus. Probable transcription factor that may be involved in stress responses. The protein is Zinc finger protein ZAT8 (ZAT8) of Arabidopsis thaliana (Mouse-ear cress).